Reading from the N-terminus, the 171-residue chain is Calcium channel flower homolog (171 aa).

The Cytoplasmic segment spans residues M1–R31. Residues L32–I52 traverse the membrane as a helical segment. The Extracellular segment spans residues H53 to N56. A helical transmembrane segment spans residues I57–F77. Over C78–A101 the chain is Cytoplasmic. Residues V102 to L122 traverse the membrane as a helical segment. The Extracellular portion of the chain corresponds to G123–N124. The helical transmembrane segment at A125–K141 threads the bilayer. Over K142 to L171 the chain is Cytoplasmic.

This sequence belongs to the calcium channel flower family. Interacts with adaptor protein complex 2 (AP-2). In terms of tissue distribution, expressed in neurons in the brain (at protein level). Expressed in neuroblastoma cell lines (at protein level). Expressed in cytotoxic T-lymphoocytes (at protein level). As to expression, low levels of expression in various tissues including the brain, eye, heart, liver and colon. Expression in the heart is at slightly higher levels than isoform 3. Expressed in skin cells. Very low levels of expression in the brain, liver and eye. Detected at very low levels of expression in skin cells. In terms of tissue distribution, expressed in various tissues, with highest levels of expression in the brain and eye. Expressed in skin cells. Low levels of expression in the liver, colon, heart and spleen. As to expression, barely detected in the brain and liver.

The protein localises to the cell membrane. It is found in the vesicle. In terms of biological role, transmembrane protein which mediates synaptic endocytosis and fitness-based cell culling. In response to different stimulus strengths, controls two major modes of synaptic vesicle (SV) retrieval in hippocampal neurons; Clathrin-mediated endocytosis (CME) in response to mild stimulation and activity-dependent bulk endocytosis (ADBE) in response to strong stimulation. In cytotoxic T-lymphoocytes (CTLs) facilitates calcium-dependent endocytosis of cytotoxic granules (CGs) at the immuno synapse. Different isoforms work as fitness fingerprints in 'loser' and 'winner' cells and thereby mediate win/lose decisions as part of the cell competition process. The polypeptide is Calcium channel flower homolog (Cacfd1) (Mus musculus (Mouse)).